A 138-amino-acid polypeptide reads, in one-letter code: Actophorin (138 aa).

Position 2 is a blocked amino end (Ser) (Ser-2). An ADF-H domain is found at 3–134; the sequence is GIAVSDDCVQ…SEDAVSERAK (132 aa).

This sequence belongs to the actin-binding proteins ADF family. Monomer.

Its subcellular location is the cytoplasm. Its function is as follows. Forms a one to one complex with monomeric actin. Can regulate the pool available for polymerization. Severs actin filaments in a dose-dependent manner. The sequence is that of Actophorin from Acanthamoeba castellanii (Amoeba).